The chain runs to 428 residues: UPF0597 protein BF3560 (428 aa).

It belongs to the UPF0597 family.

The polypeptide is UPF0597 protein BF3560 (Bacteroides fragilis (strain ATCC 25285 / DSM 2151 / CCUG 4856 / JCM 11019 / LMG 10263 / NCTC 9343 / Onslow / VPI 2553 / EN-2)).